A 247-amino-acid chain; its full sequence is 2,3-bisphosphoglycerate-dependent phosphoglycerate mutase (247 aa).

Substrate-binding positions include 8–15 (RHGESQWN), 21–22 (TG), Arg60, 87–90 (ERHY), Lys98, 114–115 (RR), and 183–184 (GN). His9 functions as the Tele-phosphohistidine intermediate in the catalytic mechanism. The Proton donor/acceptor role is filled by Glu87.

It belongs to the phosphoglycerate mutase family. BPG-dependent PGAM subfamily.

The catalysed reaction is (2R)-2-phosphoglycerate = (2R)-3-phosphoglycerate. It functions in the pathway carbohydrate degradation; glycolysis; pyruvate from D-glyceraldehyde 3-phosphate: step 3/5. Catalyzes the interconversion of 2-phosphoglycerate and 3-phosphoglycerate. The chain is 2,3-bisphosphoglycerate-dependent phosphoglycerate mutase from Chlorobium chlorochromatii (strain CaD3).